Here is a 481-residue protein sequence, read N- to C-terminus: Cysteine--tRNA ligase (481 aa).

Cys27 lines the Zn(2+) pocket. Residues 29-39 (PTVYNYAHIGN) carry the 'HIGH' region motif. Residues Cys222, His247, and Glu251 each contribute to the Zn(2+) site. The short motif at 279 to 283 (KMSKS) is the 'KMSKS' region element. Position 282 (Lys282) interacts with ATP.

The protein belongs to the class-I aminoacyl-tRNA synthetase family. As to quaternary structure, monomer. Requires Zn(2+) as cofactor.

The protein resides in the cytoplasm. It catalyses the reaction tRNA(Cys) + L-cysteine + ATP = L-cysteinyl-tRNA(Cys) + AMP + diphosphate. This Borrelia hermsii (strain HS1 / DAH) protein is Cysteine--tRNA ligase.